Reading from the N-terminus, the 722-residue chain is Pre-B-cell leukemia transcription factor-interacting protein 1 (722 aa).

Over residues 1–10 (MASCPDSDNS) the composition is skewed to polar residues. Residues 1–180 (MASCPDSDNS…TAAVDGEDQA (180 aa)) form a disordered region. Positions 88–97 (DDGHGTKRPG) are enriched in basic and acidic residues. S133, S144, S145, and S146 each carry phosphoserine. The residue at position 150 (T150) is a Phosphothreonine. S166 is subject to Phosphoserine. Coiled-coil stretches lie at residues 266 to 346 (LLLD…RGVD) and 373 to 401 (DTSLLEQHKQLEAEAKALRQELQKQWQLL). Over residues 442–453 (QGINTGRSSNDS) the composition is skewed to polar residues. 2 disordered regions span residues 442–562 (QGIN…SPDS) and 691–722 (RRSKKKEKQPWNHRAVGPREEHSRHPHHYHQG). Basic and acidic residues-rich tracts occupy residues 465 to 536 (HPRE…DPKV) and 546 to 559 (SGERQKHSWGKDNS). A Nuclear localization signal motif is present at residues 482–502 (QKAEHWKLKKEESGQDRKKSW). A Phosphoserine modification is found at S559. Positions 686-711 (DKALKRRSKKKEKQPWNHRAVGPREE) match the Nuclear localization signal motif.

Interacts with ESR1, PBX1, PBX2 and PBX3. Interacts with TEX11.

Its subcellular location is the cytoplasm. The protein localises to the cytoskeleton. The protein resides in the nucleus. Functionally, regulator of pre-B-cell leukemia transcription factors (BPXs) function. Inhibits the binding of PBX1-HOX complex to DNA and blocks the transcriptional activity of E2A-PBX1. Tethers estrogen receptor-alpha (ESR1) to microtubules and allows them to influence estrogen receptors-alpha signaling. The polypeptide is Pre-B-cell leukemia transcription factor-interacting protein 1 (Pbxip1) (Rattus norvegicus (Rat)).